Here is a 187-residue protein sequence, read N- to C-terminus: Cell division protein SepF (187 aa).

The segment at 21–97 (EVEVPDKQQQ…ATPNNASQES (77 aa)) is disordered. Composition is skewed to polar residues over residues 38–63 (EQSQ…YTTT) and 70–97 (RMSN…SQES).

Belongs to the SepF family. Homodimer. Interacts with FtsZ.

It localises to the cytoplasm. Cell division protein that is part of the divisome complex and is recruited early to the Z-ring. Probably stimulates Z-ring formation, perhaps through the cross-linking of FtsZ protofilaments. Its function overlaps with FtsA. The polypeptide is Cell division protein SepF (Staphylococcus aureus (strain MRSA252)).